A 526-amino-acid chain; its full sequence is Tyrosine 2,3-aminomutase (526 aa).

The Proton donor/acceptor role is filled by Tyr41. Substrate is bound at residue His71. The 5-imidazolinone (Ala-Gly) cross-link spans 130–132 (ASG). A 2,3-didehydroalanine (Ser) modification is found at Ser131. 2 residues coordinate substrate: Asn183 and Arg288.

Belongs to the TAL/TAM family. In terms of assembly, homotetramer; dimer of dimers. Contains an active site 4-methylidene-imidazol-5-one (MIO), which is formed autocatalytically by cyclization and dehydration of residues Ala-Ser-Gly.

The catalysed reaction is L-tyrosine = 3-amino-3-(4-hydroxyphenyl)propanoate. The enzyme catalyses L-tyrosine = (E)-4-coumarate + NH4(+). Functionally, has aminomutase and, to a much lesser extent, ammonia-lyase activity. Primarily, catalyzes the rearrangement of L-tyrosine to S-beta-tyrosine, which is probably incorporated into secondary metabolite myxovalargin. The aminomutase activity exclusively produces S-beta-tyrosine. The polypeptide is Tyrosine 2,3-aminomutase (Myxococcus fulvus).